Here is a 658-residue protein sequence, read N- to C-terminus: Exoribonuclease 2 (658 aa).

The RNB domain occupies 189 to 530 (REDLTSLYFT…VNHRLIKQVL (342 aa)). Residues 576–658 (AVEFDCEIAD…ETRSIVGNII (83 aa)) enclose the S1 motif domain.

The protein belongs to the RNR ribonuclease family. RNase II subfamily.

Its subcellular location is the cytoplasm. It catalyses the reaction Exonucleolytic cleavage in the 3'- to 5'-direction to yield nucleoside 5'-phosphates.. Involved in mRNA degradation. Hydrolyzes single-stranded polyribonucleotides processively in the 3' to 5' direction. This Actinobacillus pleuropneumoniae serotype 3 (strain JL03) protein is Exoribonuclease 2.